The sequence spans 109 residues: Thiosulfate sulfurtransferase GlpE (109 aa).

The Rhodanese domain occupies 16–104; that stretch reads REQGAVVVDV…WRTTFPSETA (89 aa). The active-site Cysteine persulfide intermediate is the Cys-64.

Belongs to the GlpE family.

It is found in the cytoplasm. It carries out the reaction thiosulfate + hydrogen cyanide = thiocyanate + sulfite + 2 H(+). It catalyses the reaction thiosulfate + [thioredoxin]-dithiol = [thioredoxin]-disulfide + hydrogen sulfide + sulfite + 2 H(+). Functionally, transferase that catalyzes the transfer of sulfur from thiosulfate to thiophilic acceptors such as cyanide or dithiols. May function in a CysM-independent thiosulfate assimilation pathway by catalyzing the conversion of thiosulfate to sulfite, which can then be used for L-cysteine biosynthesis. In Pseudomonas fluorescens (strain Pf0-1), this protein is Thiosulfate sulfurtransferase GlpE.